The sequence spans 575 residues: Intermediate filament protein ifa-1 (575 aa).

2 disordered regions span residues 1–30 (MMEITRETMSFTSTTPSARAPLGGRTTGNV) and 45–72 (SGAGSGLSPFGQNAASTIRDSREREKKE). The segment at 1–72 (MMEITRETMS…RDSREREKKE (72 aa)) is head. The segment covering 7 to 17 (ETMSFTSTTPS) has biased composition (polar residues). Basic and acidic residues predominate over residues 63–72 (RDSREREKKE). In terms of domain architecture, IF rod spans 69–422 (EKKEMSDLND…KMLEGEENRA (354 aa)). The tract at residues 73-104 (MSDLNDRLASYIEKVRFLEAQNRKLAADLDAL) is coil 1A. The tract at residues 105–118 (RSKWGKDTHNIRNM) is linker 1. Positions 119–256 (YEGELVDAQK…RVHDNEIKEL (138 aa)) are coil 1B. The tract at residues 257–274 (QTLASRDTTPENREFFKN) is linker 12. The coil 2 stretch occupies residues 275 to 422 (ELSSAIRDIR…KMLEGEENRA (148 aa)). Residues 423–572 (GLKQLVEQVV…EERATHIQRQ (150 aa)) form a tail region. Residues 455–572 (SRQSFQRSAK…EERATHIQRQ (118 aa)) form the LTD domain.

This sequence belongs to the intermediate filament family. In terms of assembly, forms some heteromeric filaments with ifb-1. In terms of tissue distribution, isoform d is abundantly expressed in the marginal cells of the pharynx, forming apicobasally oriented thick filament bundles that are attached to the apical and basal plasma membrane by hemi-adherens junctions. Expression of isoform c is also seen in the excretory cells and in the uterus. Isoform c is detectable in the amphid sensory neurins and the pharyngeal-intestinal valve. Both isoform c and isoform d are expressed in the rectum and vulva and in some neurons of the tail. In larvae, expression is seen in the excretory cell, the vulva, the rectum and in the thick filament bundles of the pharynx. Expression in pharynx begins in late embryos.

The protein resides in the cytoplasm. Functionally, cytoplasmic intermediate filaments make up the structural component of the cytoskeleton providing mechanical strength to cells. Essential protein required during embryogenesis especially for survival past the L1 larva stage, involved in intestine morphogenesis. The polypeptide is Intermediate filament protein ifa-1 (ifa-1) (Caenorhabditis elegans).